A 354-amino-acid polypeptide reads, in one-letter code: UDP-N-acetylglucosamine--N-acetylmuramyl-(pentapeptide) pyrophosphoryl-undecaprenol N-acetylglucosamine transferase (354 aa).

UDP-N-acetyl-alpha-D-glucosamine is bound by residues 11 to 13 (TAG), Arg164, Ser194, and Gln289.

This sequence belongs to the glycosyltransferase 28 family. MurG subfamily.

Its subcellular location is the cell membrane. It catalyses the reaction di-trans,octa-cis-undecaprenyl diphospho-N-acetyl-alpha-D-muramoyl-L-alanyl-D-glutamyl-meso-2,6-diaminopimeloyl-D-alanyl-D-alanine + UDP-N-acetyl-alpha-D-glucosamine = di-trans,octa-cis-undecaprenyl diphospho-[N-acetyl-alpha-D-glucosaminyl-(1-&gt;4)]-N-acetyl-alpha-D-muramoyl-L-alanyl-D-glutamyl-meso-2,6-diaminopimeloyl-D-alanyl-D-alanine + UDP + H(+). It participates in cell wall biogenesis; peptidoglycan biosynthesis. Its function is as follows. Cell wall formation. Catalyzes the transfer of a GlcNAc subunit on undecaprenyl-pyrophosphoryl-MurNAc-pentapeptide (lipid intermediate I) to form undecaprenyl-pyrophosphoryl-MurNAc-(pentapeptide)GlcNAc (lipid intermediate II). This chain is UDP-N-acetylglucosamine--N-acetylmuramyl-(pentapeptide) pyrophosphoryl-undecaprenol N-acetylglucosamine transferase, found in Clostridium botulinum (strain Kyoto / Type A2).